Here is a 514-residue protein sequence, read N- to C-terminus: LWamide neuropeptides (514 aa).

The signal sequence occupies residues 1 to 22 (MALKCHLVLLAITLLLAQCSGS). The segment covering 23-53 (VDKKDSTTNHLDEKKTDSTEAHIVQETDALK) has biased composition (basic and acidic residues). Positions 23-75 (VDKKDSTTNHLDEKKTDSTEAHIVQETDALKENSYLGAEEESKEEDKKRSAAP) are excised as a propeptide. The tract at residues 23-180 (VDKKDSTTNH…PGLWGRSADA (158 aa)) is disordered. A tryptophan amide mark is found at W81 and W90. A propeptide spanning residues 93 to 97 (SADAG) is cleaved from the precursor. W102 and W111 each carry tryptophan amide. Positions 114 to 118 (SADAG) are excised as a propeptide. A tryptophan amide mark is found at W123 and W132. A propeptide spanning residues 135 to 139 (SADAG) is cleaved from the precursor. W144 and W153 each carry tryptophan amide. Residues 156–160 (SADAG) constitute a propeptide that is removed on maturation. W165 and W174 each carry tryptophan amide. The propeptide occupies 177–181 (SADAR). Position 186 is a tryptophan amide (W186). Residues 190–199 (EIYALWGGKR) constitute a propeptide that is removed on maturation. W205 is subject to Tryptophan amide. A propeptide spanning residues 208–212 (SADPG) is cleaved from the precursor. W217 is modified (tryptophan amide). A propeptide spanning residues 221–230 (ELVGLWGGKR) is cleaved from the precursor. W236 bears the Tryptophan amide mark. Positions 239–243 (SAEAG) are excised as a propeptide. Tryptophan amide is present on residues W248 and W257. The disordered stretch occupies residues 258–475 (GRSADPLQPG…GRSAGSGQLG (218 aa)). Positions 260–264 (SADPL) are excised as a propeptide. A tryptophan amide mark is found at W269 and W278. The propeptide occupies 281–284 (SADP). Residues W290 and W299 each carry the tryptophan amide modification. Residues 302–305 (SADP) constitute a propeptide that is removed on maturation. Residues W311 and W320 each carry the tryptophan amide modification. A propeptide spanning residues 323–326 (SADP) is cleaved from the precursor. 2 positions are modified to tryptophan amide: W332 and W341. A propeptide spanning residues 344–347 (SADP) is cleaved from the precursor. Residue W353 is modified to Tryptophan amide. The propeptide occupies 356–366 (SPGLWGRSADP). At W372 the chain carries Tryptophan amide. Residues 376–387 (QNPGFWGRSADP) constitute a propeptide that is removed on maturation. Tryptophan amide occurs at positions 393 and 402. Positions 405–408 (SADP) are excised as a propeptide. 2 positions are modified to tryptophan amide: W414 and W423. A propeptide spanning residues 426–429 (SADP) is cleaved from the precursor. 2 positions are modified to tryptophan amide: W435 and W444. The propeptide occupies 447–450 (SADP). A tryptophan amide mark is found at W456 and W465. Residues 468-472 (SAGSG) constitute a propeptide that is removed on maturation. W477 and W487 each carry tryptophan amide. The disordered stretch occupies residues 489–514 (RSAEPPQFEDLEDLKKKSAIPQPKGQ). Positions 490-514 (SAEPPQFEDLEDLKKKSAIPQPKGQ) are excised as a propeptide.

Belongs to the LWamide neuropeptide family.

The protein localises to the secreted. Its function is as follows. Metamorphosin A may be part of an internal signaling system involved in control of metamorphosis. The polypeptide is LWamide neuropeptides (Anthopleura elegantissima (Green aggregating anemone)).